A 265-amino-acid chain; its full sequence is Protein N-terminal and lysine N-methyltransferase EFM7 (265 aa).

Residues 1–25 form a disordered region; the sequence is MSSDHEEDSLYGATELFGEPDGFYE. S-adenosyl-L-methionine contacts are provided by residues Trp-67, 93 to 95, Asp-115, Trp-152, and Ser-176; that span reads GAA.

The protein belongs to the class I-like SAM-binding methyltransferase superfamily. EFM7 family.

The protein resides in the cytoplasm. Its function is as follows. S-adenosyl-L-methionine-dependent protein methyltransferase that trimethylates the N-terminal glycine 'Gly-2' of elongation factor 1-alpha, before also catalyzing the mono- and dimethylation of 'Lys-3'. This chain is Protein N-terminal and lysine N-methyltransferase EFM7, found in Eremothecium gossypii (strain ATCC 10895 / CBS 109.51 / FGSC 9923 / NRRL Y-1056) (Yeast).